The primary structure comprises 1038 residues: DNA polymerase delta catalytic subunit (1038 aa).

A disordered region spans residues 1 to 29; the sequence is MSHSIPITSSPPPALKKLKLPNGSEEPSE. Zn(2+)-binding residues include cysteine 942, cysteine 945, cysteine 958, and cysteine 961. A CysA-type zinc finger spans residues 942 to 961; it reads CVSCRTPLKKDNLGALCPNC. [4Fe-4S] cluster contacts are provided by cysteine 992, cysteine 995, cysteine 1005, and cysteine 1010. The CysB motif signature appears at 992 to 1010; that stretch reads CQRCQGSLHQEVLCSNKDC.

Belongs to the DNA polymerase type-B family. As to quaternary structure, heterodimer with subunits of 125 kDa and 50 kDa. The 125 kDa subunit contains the polymerase active site and most likely the active site for the 3'-5' exonuclease activity. [4Fe-4S] cluster serves as cofactor.

The protein localises to the nucleus. It carries out the reaction DNA(n) + a 2'-deoxyribonucleoside 5'-triphosphate = DNA(n+1) + diphosphate. In terms of biological role, this polymerase possesses two enzymatic activities: DNA synthesis (polymerase) and an exonucleolytic activity that degrades single-stranded DNA in the 3'- to 5'-direction. This Candida albicans (Yeast) protein is DNA polymerase delta catalytic subunit (POL3).